Reading from the N-terminus, the 199-residue chain is Casparian strip membrane protein 1 (199 aa).

Over 1 to 37 (MKSESAAIDIPESSSVAKGKAPLIAVSRNEKGGYRKG) the chain is Cytoplasmic. The chain crosses the membrane as a helical span at residues 38–58 (IAIFDFILRLAAIATALAAAA). The Extracellular segment spans residues 59–87 (AMGTSDETLPFFTQFFQFQASYDDLPTFQ). Residues 88–108 (FFVIAIAIVGGYLVLSLPFSI) form a helical membrane-spanning segment. At 109-120 (VAIVRPHAVGPR) the chain is on the cytoplasmic side. A helical membrane pass occupies residues 121–141 (LLLIILDAVALTLNTAAGAAA). The Extracellular segment spans residues 142 to 173 (AAIVYLAHNGNSNTNWLAICQQYGDFCQKVSG). Residues 174 to 194 (AVVASFITVVIFVFLIVLSAF) traverse the membrane as a helical segment. At 195–199 (ALRRH) the chain is on the cytoplasmic side.

This sequence belongs to the Casparian strip membrane proteins (CASP) family. Homodimer and heterodimers.

It localises to the cell membrane. Its function is as follows. Regulates membrane-cell wall junctions and localized cell wall deposition. Required for establishment of the Casparian strip membrane domain (CSD) and the subsequent formation of Casparian strips, a cell wall modification of the root endodermis that determines an apoplastic barrier between the intraorganismal apoplasm and the extraorganismal apoplasm and prevents lateral diffusion. The chain is Casparian strip membrane protein 1 from Populus trichocarpa (Western balsam poplar).